The sequence spans 114 residues: Lymphotactin (114 aa).

Positions 1-21 (MRLLLLTFLGVCCLTPWVVEG) are cleaved as a signal peptide. Cys-32 and Cys-69 are oxidised to a cystine. A disordered region spans residues 92–114 (KNMAETVPTGAQRSTSTAITLTG). The segment covering 100–114 (TGAQRSTSTAITLTG) has biased composition (polar residues).

The protein belongs to the intercrine gamma family. Expressed in activated CD8(+) T cells. In the thymus, expressed by medullary thymic epithelial cells.

Its subcellular location is the secreted. Chemotactic activity for lymphocytes but not for monocytes or neutrophils. In thymus, mediates medullary accumulation of thymic dendritic cells and contributes to regulatoy T cell development, playing a role in self-tolerance establishment. The sequence is that of Lymphotactin (Xcl1) from Mus musculus (Mouse).